We begin with the raw amino-acid sequence, 447 residues long: N-succinylarginine dihydrolase (447 aa).

Substrate is bound by residues 19–28 (AGLSFGNEAS), Asn110, and 137–138 (HR). Residue Glu174 is part of the active site. Position 212 (Arg212) interacts with substrate. His248 is an active-site residue. Asp250 and Asn359 together coordinate substrate. The active-site Nucleophile is the Cys365.

Belongs to the succinylarginine dihydrolase family. As to quaternary structure, homodimer.

It catalyses the reaction N(2)-succinyl-L-arginine + 2 H2O + 2 H(+) = N(2)-succinyl-L-ornithine + 2 NH4(+) + CO2. Its pathway is amino-acid degradation; L-arginine degradation via AST pathway; L-glutamate and succinate from L-arginine: step 2/5. In terms of biological role, catalyzes the hydrolysis of N(2)-succinylarginine into N(2)-succinylornithine, ammonia and CO(2). The polypeptide is N-succinylarginine dihydrolase (Salmonella schwarzengrund (strain CVM19633)).